The sequence spans 610 residues: tRNA uridine 5-carboxymethylaminomethyl modification enzyme MnmG (610 aa).

14-19 contacts FAD; sequence GAGHAG. Residue 274 to 288 participates in NAD(+) binding; that stretch reads GPRYCPSIEDKIVKF.

This sequence belongs to the MnmG family. As to quaternary structure, homodimer. Heterotetramer of two MnmE and two MnmG subunits. It depends on FAD as a cofactor.

It localises to the cytoplasm. Functionally, NAD-binding protein involved in the addition of a carboxymethylaminomethyl (cmnm) group at the wobble position (U34) of certain tRNAs, forming tRNA-cmnm(5)s(2)U34. In Chlamydia trachomatis serovar A (strain ATCC VR-571B / DSM 19440 / HAR-13), this protein is tRNA uridine 5-carboxymethylaminomethyl modification enzyme MnmG.